The sequence spans 884 residues: Chitin synthase E (884 aa).

Disordered stretches follow at residues 1-58 and 73-108; these read MGTP…PAVS and AVFA…SRAG. 2 stretches are compositionally biased toward polar residues: residues 37-48 and 84-93; these read QSLLERNNSSHY and EAASENTFRA. The N-linked (GlcNAc...) asparagine glycan is linked to Asn-44. A compositionally biased stretch (basic and acidic residues) spans 95 to 105; that stretch reads SNGDKASREGS. A glycan (N-linked (GlcNAc...) asparagine) is linked at Asn-301. 7 helical membrane passes run 513-532, 556-576, 597-617, 635-655, 681-701, 708-728, and 812-832; these read WLNG…GRIY, IMTW…MDLV, IVNN…FIMA, YFSL…VGAF, GGIV…ASVL, IITS…ILMV, and VLVC…TATG. The N-linked (GlcNAc...) asparagine glycan is linked to Asn-840. A helical membrane pass occupies residues 852-872; the sequence is VILWITAGLSLFRFIGSLWFL.

Belongs to the chitin synthase family. Class III subfamily.

The protein localises to the cell membrane. The catalysed reaction is [(1-&gt;4)-N-acetyl-beta-D-glucosaminyl](n) + UDP-N-acetyl-alpha-D-glucosamine = [(1-&gt;4)-N-acetyl-beta-D-glucosaminyl](n+1) + UDP + H(+). Functionally, polymerizes chitin, a structural polymer of the cell wall and septum, by transferring the sugar moiety of UDP-GlcNAc to the non-reducing end of the growing chitin polymer. Plays an important role in septal growth or maintenance. Mediates colony spore formation. ChsE and chsD seem to play a functionally redundant role in lateral cell wall chitin synthesis. Involved in resistance to echinocandins. The sequence is that of Chitin synthase E from Aspergillus niger (strain ATCC MYA-4892 / CBS 513.88 / FGSC A1513).